A 130-amino-acid polypeptide reads, in one-letter code: MSLMDPLANALNHVSNCESVGKNVAYLKPASKLIGRVLNVMQDQGYIGNFEYIEDGKAGVYKVDLIGQINKCGAVKPRFAVKNHDFEKFEKRYLPAKGFGLLIVSTPKGLMTHDEARSAGVGGRLISYIY.

This sequence belongs to the universal ribosomal protein uS8 family. As to quaternary structure, part of the 30S ribosomal subunit.

One of the primary rRNA binding proteins, it binds directly to 16S rRNA central domain where it helps coordinate assembly of the platform of the 30S subunit. The polypeptide is Small ribosomal subunit protein uS8 (Methanococcus maripaludis (strain C6 / ATCC BAA-1332)).